An 88-amino-acid chain; its full sequence is Meiosis-expressed gene 1 protein (88 aa).

Belongs to the MEIG1 family. In terms of assembly, interacts with PACRG. Interacts with MORN3. As to expression, expressed in the testes (at protein level). Expressed in the ovary. Several isoforms have been identified differing in their 5'-untranslated exons. These isoforms show different tissue expression. Some are expressed in various tissues, including lung, liver, brain, testis, oviduct and oocytes. Some are testis-specific.

In terms of biological role, essential for spermiogenesis. This chain is Meiosis-expressed gene 1 protein, found in Mus musculus (Mouse).